Consider the following 709-residue polypeptide: Caprin-1 (709 aa).

Composition is skewed to low complexity over residues 1-15 (MPSA…SKSS) and 22-43 (GSSG…QHPA). The tract at residues 1-50 (MPSATSHSGSGSKSSGPPPPSGSSGSEAAAGAGAAAPASQHPATGTGAVQ) is disordered. Pro2 carries the N-acetylproline modification. N-acetylalanine is present on Pro2. Ser10 is subject to Phosphoserine. Positions 60–94 (VIDKKLRNLEKKKGKLDDYQERMNKGERLNQDQLD) form a coiled coil. The residue at position 115 (Ser115) is a Phosphoserine. Residues 125 to 153 (KTIKKTARREQLMREEAEQKRLKTVLELQ) are a coiled coil. An Omega-N-methylarginine modification is found at Arg165. The disordered stretch occupies residues 260 to 291 (EEAASAPAVEDQVPEAEPEPAEEYTEQSEVES). The span at 271 to 291 (QVPEAEPEPAEEYTEQSEVES) shows a compositional bias: acidic residues. 2 positions are modified to phosphoserine: Ser335 and Ser343. Residues 360-381 (QDLMAQMQGPYNFIQDSMLDFE) are G3BP1-binding. 3 disordered regions span residues 417–446 (LAQP…TASQ), 475–499 (TDQT…GTSK), and 524–709 (APVP…QQVN). A compositionally biased stretch (polar residues) spans 433-446 (PLVSSTSEGYTASQ). 2 stretches are compositionally biased toward low complexity: residues 477-491 (QTTA…SQPQ) and 537-570 (QQNQ…QTVV). Over residues 577-605 (PDQSHQVTGNHQQPPQQNTGFPRSNQPYY) the composition is skewed to polar residues. The residue at position 625 (Tyr625) is a Phosphotyrosine; by EPHA4. Arg626 and Arg633 each carry omega-N-methylarginine. Tyr636 and Tyr639 each carry phosphotyrosine; by EPHA4. Position 640 is an omega-N-methylarginine (Arg640). Residues 642–657 (SFSNTPNSGYTQSQFS) are compositionally biased toward polar residues. Ser644 and Ser649 each carry an O-linked (GlcNAc) serine glycan. Phosphotyrosine; by EPHA4 occurs at positions 651, 662, 665, and 670. Composition is skewed to low complexity over residues 676 to 686 (RGSGQSGPRGA) and 697 to 709 (NRGM…QQVN). Arg698 is subject to Asymmetric dimethylarginine; alternate. Arg698 carries the omega-N-methylarginine; alternate modification.

It belongs to the caprin family. May form homomultimers. Interacts with G3BP1; interaction is direct and promotes stress granule formation. Interacts with G3BP2; interaction is direct and promotes stress granule formation. Interacts with PQBP1. Interacts with DDX3X. Interacts (when phosphorylated by EPHA4) with FMR1; interaction with FMR1 promotes formation of a membraneless compartment. As to quaternary structure, (Microbial infection) Interacts with Zika virus capsid protein C; this interaction is probably linked to the inhibition of stress granules formation by the virus. In terms of assembly, (Microbial infection) Interacts with rotavirus A non-structural protein 5; this interaction probably plays a role in the sequestration of CAPRIN1 in viral factories. (Microbial infection) Interacts with Japanese encephalitis virus capsid protein C; this interaction is involved in the suppression of the integrated stress response by the virus. Tyrosine phosphorylation by EPHA4 promotes interaction with FMR1 and liquid-liquid phase separation (LLPS) for the formation of a membraneless compartment that concentrates mRNAs with associated regulatory factors. Post-translationally, O-glycosylated (O-GlcNAcylated), in a cell cycle-dependent manner. O-glycosylation by OGT inhibit ability to undergo liquid-liquid phase separation (LLPS). As to expression, ubiquitous.

Its subcellular location is the cytoplasm. It is found in the cytoplasmic ribonucleoprotein granule. It localises to the cytosol. The protein localises to the cell projection. The protein resides in the dendrite. Its subcellular location is the lamellipodium. Ability to mediate liquid-liquid phase separation is regulated by ATP: moderate concentrations of ATP enhance phase separation, whereas high concentrations of ATP lead to inhibition of phase separation. MRNA-binding protein that acts as a regulator of mRNAs transport, translation and/or stability, and which is involved in neurogenesis, synaptic plasticity in neurons and cell proliferation and migration in multiple cell types. Plays an essential role in cytoplasmic stress granule formation. Acts as an mRNA regulator by mediating formation of some phase-separated membraneless compartment: undergoes liquid-liquid phase separation upon binding to target mRNAs, leading to assemble mRNAs into cytoplasmic ribonucleoprotein granules that concentrate mRNAs with associated regulatory factors. Undergoes liquid-liquid phase separation following phosphorylation and interaction with FMR1, promoting formation of cytoplasmic ribonucleoprotein granules that concentrate mRNAs with factors that inhibit translation and mediate deadenylation of target mRNAs. In these cytoplasmic ribonucleoprotein granules, CAPRIN1 mediates recruitment of CNOT7 deadenylase, leading to mRNA deadenylation and degradation. Binds directly and selectively to MYC and CCND2 mRNAs. In neuronal cells, directly binds to several mRNAs associated with RNA granules, including BDNF, CAMK2A, CREB1, MAP2, NTRK2 mRNAs, as well as to GRIN1 and KPNB1 mRNAs, but not to rRNAs. This chain is Caprin-1, found in Homo sapiens (Human).